A 459-amino-acid polypeptide reads, in one-letter code: tRNA-2-methylthio-N(6)-dimethylallyladenosine synthase (459 aa).

Positions 1-116 (MRAHLITYGC…IGKALETNER (116 aa)) constitute an MTTase N-terminal domain. [4Fe-4S] cluster is bound by residues Cys-10, Cys-46, Cys-79, Cys-148, Cys-152, and Cys-155. The Radical SAM core domain occupies 134 to 367 (PQGKLQAHLT…IAKQKEWSAR (234 aa)). Residues 370-433 (AAKVGTIQEV…PHMLYGRLIG (64 aa)) enclose the TRAM domain.

The protein belongs to the methylthiotransferase family. MiaB subfamily. As to quaternary structure, monomer. [4Fe-4S] cluster is required as a cofactor.

The protein localises to the cytoplasm. The enzyme catalyses N(6)-dimethylallyladenosine(37) in tRNA + (sulfur carrier)-SH + AH2 + 2 S-adenosyl-L-methionine = 2-methylsulfanyl-N(6)-dimethylallyladenosine(37) in tRNA + (sulfur carrier)-H + 5'-deoxyadenosine + L-methionine + A + S-adenosyl-L-homocysteine + 2 H(+). Functionally, catalyzes the methylthiolation of N6-(dimethylallyl)adenosine (i(6)A), leading to the formation of 2-methylthio-N6-(dimethylallyl)adenosine (ms(2)i(6)A) at position 37 in tRNAs that read codons beginning with uridine. This Deinococcus geothermalis (strain DSM 11300 / CIP 105573 / AG-3a) protein is tRNA-2-methylthio-N(6)-dimethylallyladenosine synthase.